Consider the following 305-residue polypeptide: Protoheme IX farnesyltransferase (305 aa).

9 helical membrane passes run 31–51, 52–72, 102–119, 123–145, 151–171, 179–199, 225–245, 247–267, and 284–304; these read VMSL…YSVH, PFIA…AGAI, ALSF…FMAL, LLAS…IWLK, NIVI…AAVS, IILF…LALF, ILIY…IGMN, FIYL…SGSL, and SIFY…ISLI.

Belongs to the UbiA prenyltransferase family. Protoheme IX farnesyltransferase subfamily.

Its subcellular location is the cell inner membrane. It carries out the reaction heme b + (2E,6E)-farnesyl diphosphate + H2O = Fe(II)-heme o + diphosphate. The protein operates within porphyrin-containing compound metabolism; heme O biosynthesis; heme O from protoheme: step 1/1. Functionally, converts heme B (protoheme IX) to heme O by substitution of the vinyl group on carbon 2 of heme B porphyrin ring with a hydroxyethyl farnesyl side group. In Rickettsia felis (strain ATCC VR-1525 / URRWXCal2) (Rickettsia azadi), this protein is Protoheme IX farnesyltransferase.